The chain runs to 606 residues: ATP-dependent RNA helicase DBP6 (606 aa).

Disordered stretches follow at residues 1–88 (MFSQ…PEVD) and 101–124 (KFKQ…EDAN). Acidic residues-rich tracts occupy residues 35 to 71 (DESS…EDED), 78 to 88 (NMEIDSQPEVD), and 109 to 124 (ETIE…EDAN). The short motif at 169–197 (KAFTDFKSSSFMIKNLEKMGFTEAFSVQI) is the Q motif element. A Helicase ATP-binding domain is found at 211-393 (KLKPDRVGDI…SLKFYNPRLI (183 aa)). 224–231 (ASTGSGKT) contacts ATP. Positions 331-334 (DEAD) match the DEAD box motif. Residues 430-585 (ILTKFLISTN…NVDLNVKELI (156 aa)) form the Helicase C-terminal domain.

Belongs to the DEAD box helicase family. DDX51/DBP6 subfamily. In terms of assembly, associated with pre-ribosomal particles.

It localises to the nucleus. The protein resides in the nucleolus. It carries out the reaction ATP + H2O = ADP + phosphate + H(+). Functionally, ATP-binding RNA helicase involved in the biogenesis of 60S ribosomal subunits and is required for the normal formation of 25S and 5.8S rRNAs. The polypeptide is ATP-dependent RNA helicase DBP6 (DBP6) (Candida albicans (strain SC5314 / ATCC MYA-2876) (Yeast)).